Here is a 320-residue protein sequence, read N- to C-terminus: Small ribosomal subunit protein mS35 (320 aa).

Positions 24–63 are disordered; sequence SVASPAAPRAGPRTASRSERPMRRKALPPRTEKMDTDQDW.

Belongs to the mitochondrion-specific ribosomal protein mS35 family. In terms of assembly, component of the mitochondrial ribosome small subunit (28S) which comprises a 12S rRNA and about 30 distinct proteins.

The protein resides in the mitochondrion. The polypeptide is Small ribosomal subunit protein mS35 (Mus musculus (Mouse)).